Reading from the N-terminus, the 250-residue chain is Replicating protein (250 aa).

Disordered stretches follow at residues 1–23 (MFQQ…PCEK) and 168–250 (KAHM…KAFE). Basic and acidic residues-rich tracts occupy residues 13-23 (GTDEPAHPCEK) and 178-190 (DRLR…RTRA). Positions 218–237 (SRCSFTTPNRPRRTLPSSHP) are enriched in polar residues.

Functionally, required for replication. It likely regulates pTAR copy number. This is Replicating protein (repA) from Rhizobium radiobacter (Agrobacterium tumefaciens).